The primary structure comprises 221 residues: Large ribosomal subunit protein uL3 (221 aa).

It belongs to the universal ribosomal protein uL3 family. Part of the 50S ribosomal subunit. Forms a cluster with proteins L14 and L19.

One of the primary rRNA binding proteins, it binds directly near the 3'-end of the 23S rRNA, where it nucleates assembly of the 50S subunit. The chain is Large ribosomal subunit protein uL3 from Chlamydia abortus (strain DSM 27085 / S26/3) (Chlamydophila abortus).